The primary structure comprises 312 residues: Cell division control protein 2 homolog D (312 aa).

One can recognise a Protein kinase domain in the interval Phe14–Phe304. Residues Val20 to Val28 and Lys43 each bind ATP. At Thr24 the chain carries Phosphothreonine. The residue at position 25 (Tyr25) is a Phosphotyrosine. The Proton acceptor role is filled by Asp145. Residue Thr179 is modified to Phosphothreonine; by CAK.

This sequence belongs to the protein kinase superfamily. CMGC Ser/Thr protein kinase family. CDC2/CDKX subfamily.

The enzyme catalyses L-seryl-[protein] + ATP = O-phospho-L-seryl-[protein] + ADP + H(+). It catalyses the reaction L-threonyl-[protein] + ATP = O-phospho-L-threonyl-[protein] + ADP + H(+). The catalysed reaction is [DNA-directed RNA polymerase] + ATP = phospho-[DNA-directed RNA polymerase] + ADP + H(+). Plays a key role in the control of the eukaryotic cell cycle. This chain is Cell division control protein 2 homolog D (CDC2D), found in Antirrhinum majus (Garden snapdragon).